The following is a 354-amino-acid chain: Uroporphyrinogen decarboxylase (354 aa).

Residues 27-31 (RQAGR), Asp77, Tyr154, Ser209, and His327 each bind substrate.

This sequence belongs to the uroporphyrinogen decarboxylase family. As to quaternary structure, homodimer.

It is found in the cytoplasm. The enzyme catalyses uroporphyrinogen III + 4 H(+) = coproporphyrinogen III + 4 CO2. It participates in porphyrin-containing compound metabolism; protoporphyrin-IX biosynthesis; coproporphyrinogen-III from 5-aminolevulinate: step 4/4. Catalyzes the decarboxylation of four acetate groups of uroporphyrinogen-III to yield coproporphyrinogen-III. This Pseudomonas savastanoi pv. phaseolicola (strain 1448A / Race 6) (Pseudomonas syringae pv. phaseolicola (strain 1448A / Race 6)) protein is Uroporphyrinogen decarboxylase.